Here is a 266-residue protein sequence, read N- to C-terminus: Cytochrome c oxidase subunit 2 (266 aa).

At M1–M43 the chain is on the mitochondrial intermembrane side. The chain crosses the membrane as a helical span at residues F44–F64. Residues D65–E82 are Mitochondrial matrix-facing. The chain crosses the membrane as a helical span at residues I83–L103. Residues L104–I266 lie on the Mitochondrial intermembrane side of the membrane. The Cu cation site is built by H186, C221, E223, C225, H229, and M232. E223 lines the Mg(2+) pocket.

This sequence belongs to the cytochrome c oxidase subunit 2 family. Component of the cytochrome c oxidase (complex IV, CIV), a multisubunit enzyme composed of a catalytic core of 3 subunits and several supernumerary subunits. The complex exists as a monomer or a dimer and forms supercomplexes (SCs) in the inner mitochondrial membrane with ubiquinol-cytochrome c oxidoreductase (cytochrome b-c1 complex, complex III, CIII). It depends on Cu cation as a cofactor.

It localises to the mitochondrion inner membrane. It catalyses the reaction 4 Fe(II)-[cytochrome c] + O2 + 8 H(+)(in) = 4 Fe(III)-[cytochrome c] + 2 H2O + 4 H(+)(out). In terms of biological role, component of the cytochrome c oxidase, the last enzyme in the mitochondrial electron transport chain which drives oxidative phosphorylation. The respiratory chain contains 3 multisubunit complexes succinate dehydrogenase (complex II, CII), ubiquinol-cytochrome c oxidoreductase (cytochrome b-c1 complex, complex III, CIII) and cytochrome c oxidase (complex IV, CIV), that cooperate to transfer electrons derived from NADH and succinate to molecular oxygen, creating an electrochemical gradient over the inner membrane that drives transmembrane transport and the ATP synthase. Cytochrome c oxidase is the component of the respiratory chain that catalyzes the reduction of oxygen to water. Electrons originating from reduced cytochrome c in the intermembrane space (IMS) are transferred via the dinuclear copper A center (CU(A)) of subunit 2 and heme A of subunit 1 to the active site in subunit 1, a binuclear center (BNC) formed by heme A3 and copper B (CU(B)). The BNC reduces molecular oxygen to 2 water molecules using 4 electrons from cytochrome c in the IMS and 4 protons from the mitochondrial matrix. This is Cytochrome c oxidase subunit 2 (COX2) from Phytophthora megasperma (Potato pink rot fungus).